Reading from the N-terminus, the 344-residue chain is MGGLMKKNTLILGIESSCDETAASVVKNGNEIISSVVASQIESHKRFGGVVPEIASRHHVEQITLVIEEALKQANVTMDDLDGVAVTEGPGLVGALLIGVNAAKTLAFMHNLPLVGVHHIAGHIYANRFETEFKFPLLSLVVSGGHTELVLMKADNEFEIIGETRDDAAGEAYDKVARTLGLAYPGGVQIDKLAKDGEDTFHFPRAMMDEGSFDFSFSGLKSSFINTLHNLRQRGEEPNPNDMAASFQASVVDVLVSKTIRAAKQYDVKQLLLAGGVAANQGLRERLIQEVKLELPETELIIPPLALCGDNAAMIAAAGTVSFLQGKRSGFDMNANPGLLLEDI.

Fe cation contacts are provided by His-119 and His-123. Substrate-binding positions include 141–145, Asp-174, Gly-187, Asp-191, and Asn-280; that span reads VVSGG. Residue Asp-310 participates in Fe cation binding.

It belongs to the KAE1 / TsaD family. Requires Fe(2+) as cofactor.

The protein resides in the cytoplasm. The enzyme catalyses L-threonylcarbamoyladenylate + adenosine(37) in tRNA = N(6)-L-threonylcarbamoyladenosine(37) in tRNA + AMP + H(+). Functionally, required for the formation of a threonylcarbamoyl group on adenosine at position 37 (t(6)A37) in tRNAs that read codons beginning with adenine. Is involved in the transfer of the threonylcarbamoyl moiety of threonylcarbamoyl-AMP (TC-AMP) to the N6 group of A37, together with TsaE and TsaB. TsaD likely plays a direct catalytic role in this reaction. This chain is tRNA N6-adenosine threonylcarbamoyltransferase, found in Listeria monocytogenes serovar 1/2a (strain ATCC BAA-679 / EGD-e).